A 365-amino-acid polypeptide reads, in one-letter code: PHD finger protein 6 (365 aa).

Ser2 carries the post-translational modification N-acetylserine. Short sequence motifs (nuclear localization signal) lie at residues 13 to 16 (RQRK) and 129 to 133 (RKHKK). The C2HC pre-PHD-type 1 zinc finger occupies 14-52 (QRKCGFCKSNRDKECGQLLISENQKVAAHHKCMLFSSAL). Residues 14-132 (QRKCGFCKSN…IYMVYCRKHK (119 aa)) are extended PHD1 domain (ePHD1). The segment at 80-132 (LMCSLCHCPGATIGCDVKTCHRTYHYHCALHDKAQIREKPSQGIYMVYCRKHK) adopts a PHD-type 1 zinc-finger fold. Ser138, Ser145, and Ser155 each carry phosphoserine. Positions 139-211 (EADLEESFNE…RSSPSDTRPK (73 aa)) are disordered. The short motif at 157–169 (KSKKKSRKGRPRK) is the Nucleolar localization signal element. Positions 157 to 171 (KSKKKSRKGRPRKTN) are enriched in basic residues. Lys173 participates in a covalent cross-link: Glycyl lysine isopeptide (Lys-Gly) (interchain with G-Cter in SUMO2). 2 positions are modified to phosphoserine: Ser183 and Ser199. Residues 209–249 (RPKCGFCHVGEEENQARGKLHIFNAKKAAAHYKCMLFSSGT) form a C2HC pre-PHD-type 2 zinc finger. The interval 209–330 (RPKCGFCHVG…IYKLYCKNHS (122 aa)) is extended PHD2 domain (ePHD2). Lys227 participates in a covalent cross-link: Glycyl lysine isopeptide (Lys-Gly) (interchain with G-Cter in SUMO2). The PHD-type 2 zinc finger occupies 278–330 (MKCTLCSQPGATIGCEIKACVKTYHYHCGVQDKAKYIENMSRGIYKLYCKNHS). The disordered stretch occupies residues 330-365 (SGNDERDEEDEERESKSRGKVEIDQQQLTQQQLNGN). Basic and acidic residues predominate over residues 342-352 (RESKSRGKVEI). Residues 354 to 365 (QQQLTQQQLNGN) show a composition bias toward low complexity. Thr358 bears the Phosphothreonine mark.

In terms of assembly, interacts with UBTF. Interacts with the NuRD complex component RBBP4 (via the nucleolar localization motif), the interaction mediates transcriptional repression activity.

It localises to the nucleus. It is found in the nucleolus. Its subcellular location is the chromosome. The protein localises to the centromere. The protein resides in the kinetochore. Its function is as follows. Transcriptional regulator that associates with ribosomal RNA promoters and suppresses ribosomal RNA (rRNA) transcription. The sequence is that of PHD finger protein 6 (PHF6) from Bos taurus (Bovine).